Consider the following 137-residue polypeptide: NADPH-dependent 7-cyano-7-deazaguanine reductase (137 aa).

Cys50 acts as the Thioimide intermediate in catalysis. The active-site Proton donor is Asp57. Substrate contacts are provided by residues 72 to 74 and 91 to 92; these read VEL and HE.

It belongs to the GTP cyclohydrolase I family. QueF type 1 subfamily.

It is found in the cytoplasm. It catalyses the reaction 7-aminomethyl-7-carbaguanine + 2 NADP(+) = 7-cyano-7-deazaguanine + 2 NADPH + 3 H(+). The protein operates within tRNA modification; tRNA-queuosine biosynthesis. Functionally, catalyzes the NADPH-dependent reduction of 7-cyano-7-deazaguanine (preQ0) to 7-aminomethyl-7-deazaguanine (preQ1). This chain is NADPH-dependent 7-cyano-7-deazaguanine reductase, found in Synechococcus sp. (strain CC9902).